The chain runs to 465 residues: FeMo cofactor biosynthesis protein FixZ (465 aa).

The tract at residues 1–36 (MSEPEIKVGKTSSALFDRAPMAPSMPGGRASSSHGL) is disordered. The Radical SAM core domain maps to 61–312 (HHYFARMHXX…MRHCQQCRAD (252 aa)). [4Fe-4S] cluster is bound by residues Cys-75 and Cys-79. Residue Tyr-81 participates in S-adenosyl-L-methionine binding. Cys-82 contributes to the [4Fe-4S] cluster binding site. Residues Gly-129, Thr-181, and Ile-233 each coordinate S-adenosyl-L-methionine. [4Fe-4S] cluster contacts are provided by Cys-306 and Cys-309.

This sequence belongs to the radical SAM superfamily. NifB family. [4Fe-4S] cluster is required as a cofactor.

It functions in the pathway cofactor biosynthesis; Fe-Mo cofactor biosynthesis. Its function is as follows. Involved in the biosynthesis of the iron-molybdenum cofactor (FeMo-co or M-cluster) found in the dinitrogenase enzyme of the nitrogenase complex in nitrogen-fixing microorganisms. Catalyzes the crucial step of radical SAM-dependent carbide insertion that occurs concomitant with the insertion of a 9th sulfur and the rearrangement/coupling of two [4Fe-4S] clusters into a [8Fe-9S-C] cluster, the precursor to the M-cluster. The polypeptide is FeMo cofactor biosynthesis protein FixZ (fixZ) (Rhizobium leguminosarum).